A 273-amino-acid chain; its full sequence is Putative phosphoenolpyruvate synthase regulatory protein (273 aa).

154–161 (GVSRSGKT) contributes to the ADP binding site.

It belongs to the pyruvate, phosphate/water dikinase regulatory protein family. PSRP subfamily.

It carries out the reaction [pyruvate, water dikinase] + ADP = [pyruvate, water dikinase]-phosphate + AMP + H(+). The catalysed reaction is [pyruvate, water dikinase]-phosphate + phosphate + H(+) = [pyruvate, water dikinase] + diphosphate. Its function is as follows. Bifunctional serine/threonine kinase and phosphorylase involved in the regulation of the phosphoenolpyruvate synthase (PEPS) by catalyzing its phosphorylation/dephosphorylation. The protein is Putative phosphoenolpyruvate synthase regulatory protein of Neisseria meningitidis serogroup B (strain ATCC BAA-335 / MC58).